A 678-amino-acid polypeptide reads, in one-letter code: Vacuolar fusion protein mon1 (678 aa).

3 disordered regions span residues 1–116 (MDRD…YTSP), 449–474 (EENN…VTSP), and 568–591 (FETS…KTTE). Residues 10-20 (NDGTNDNNDTT) are compositionally biased toward low complexity. The segment covering 63 to 77 (RPTTQVSTIDISTLS) has biased composition (polar residues). Residues 87-105 (STSATSATSATSATRSVAS) show a composition bias toward low complexity. The segment covering 106–116 (PQSSASGYTSP) has biased composition (polar residues). Positions 450-459 (ENNSNNTNNP) are enriched in low complexity. A compositionally biased stretch (pro residues) spans 460-471 (EQPPQPPPPKPV).

This sequence belongs to the MON1/SAND family.

Its subcellular location is the endosome. The protein localises to the multivesicular body membrane. It localises to the prevacuolar compartment membrane. It is found in the vacuole membrane. In terms of biological role, in complex with CCZ1, is required for multiple vacuole delivery pathways including the cytoplasm to vacuole transport (Cvt), autophagy, pexophagy and endocytosis. The MON1-CCZ1 complex acts at the fusion of vesicles with the vacuole, through its regulation of the SNARE complex during the coordinated priming and docking stages of fusion, and particularly at the stage of tethering/docking. The sequence is that of Vacuolar fusion protein mon1 (apg-13) from Neurospora crassa (strain ATCC 24698 / 74-OR23-1A / CBS 708.71 / DSM 1257 / FGSC 987).